Here is a 296-residue protein sequence, read N- to C-terminus: Elongation factor Ts (296 aa).

Positions 82–85 (TDFV) are involved in Mg(2+) ion dislocation from EF-Tu.

This sequence belongs to the EF-Ts family.

It localises to the cytoplasm. In terms of biological role, associates with the EF-Tu.GDP complex and induces the exchange of GDP to GTP. It remains bound to the aminoacyl-tRNA.EF-Tu.GTP complex up to the GTP hydrolysis stage on the ribosome. This chain is Elongation factor Ts, found in Aromatoleum aromaticum (strain DSM 19018 / LMG 30748 / EbN1) (Azoarcus sp. (strain EbN1)).